The sequence spans 379 residues: Putative cyclic ADP-D-ribose synthase TIR2 (379 aa).

One can recognise a TIR domain in the interval 254 to 379 (KVYDVFISHS…TISWTTGLVK (126 aa)). Glu335 is a catalytic residue.

Homodimer.

The protein localises to the cytoplasm. Activated upon phage infection. Its function is as follows. One of 2 TIR-like protein components of the Thoeris antiviral defense system, composed of ThsA, TIR1 (thsB1) and TIR2 (thsB2). Phage infection activates this protein; by 70 minutes post-infection with phage SPO1, TIR2 generates a signal molecule that in turn activates the NAD(+) hydrolase activity of ThsA (tested with B.cereus). The signal is similar to cyclic ADP-D-ribose, but how it differs is unknown. Expression of Thoeris in B.subtilis (strain BEST7003) confers resistance to phages phi29, phi3T, SPBeta, SBSphi11, SBSphi13, SBSphiJ, SPO1 and SPR but not SBSphiC. The TIR paralogs confer resistance to different phages; this subunit confers resistance to phi3T, SPBeta, SBSphi13, SBSphiJ, SPO1 and SPR but not phi29, SBSphi11 or SBSphiC. There is overlap in the phage range for this system, both TIR1 and TIR2 are activated by SBSphi13, SBSphiJ, SPO1 and SPR. Probably hydrolyzes NAD(+) to make a cyclic ADP-D-ribose (cADPR) signaling molecule; might make 3'cADPR. This is Putative cyclic ADP-D-ribose synthase TIR2 from Cytobacillus dafuensis (Bacillus dafuensis).